Here is a 178-residue protein sequence, read N- to C-terminus: Large ribosomal subunit protein uL6 (178 aa).

The protein belongs to the universal ribosomal protein uL6 family. As to quaternary structure, part of the 50S ribosomal subunit.

Its function is as follows. This protein binds to the 23S rRNA, and is important in its secondary structure. It is located near the subunit interface in the base of the L7/L12 stalk, and near the tRNA binding site of the peptidyltransferase center. The chain is Large ribosomal subunit protein uL6 from Francisella tularensis subsp. tularensis (strain WY96-3418).